A 401-amino-acid polypeptide reads, in one-letter code: Imidazolonepropionase (401 aa).

Fe(3+) contacts are provided by His70 and His72. 2 residues coordinate Zn(2+): His70 and His72. Residues Arg79, Tyr142, and His175 each coordinate 4-imidazolone-5-propanoate. Tyr142 contacts N-formimidoyl-L-glutamate. His238 lines the Fe(3+) pocket. Position 238 (His238) interacts with Zn(2+). Gln241 serves as a coordination point for 4-imidazolone-5-propanoate. Asp313 provides a ligand contact to Fe(3+). Position 313 (Asp313) interacts with Zn(2+). N-formimidoyl-L-glutamate is bound by residues Asn315 and Gly317. Residue Thr318 coordinates 4-imidazolone-5-propanoate.

This sequence belongs to the metallo-dependent hydrolases superfamily. HutI family. Zn(2+) is required as a cofactor. The cofactor is Fe(3+).

Its subcellular location is the cytoplasm. It carries out the reaction 4-imidazolone-5-propanoate + H2O = N-formimidoyl-L-glutamate. It participates in amino-acid degradation; L-histidine degradation into L-glutamate; N-formimidoyl-L-glutamate from L-histidine: step 3/3. In terms of biological role, catalyzes the hydrolytic cleavage of the carbon-nitrogen bond in imidazolone-5-propanoate to yield N-formimidoyl-L-glutamate. It is the third step in the universal histidine degradation pathway. This is Imidazolonepropionase from Xanthomonas axonopodis pv. citri (strain 306).